Reading from the N-terminus, the 352-residue chain is Phospho-N-acetylmuramoyl-pentapeptide-transferase (352 aa).

A run of 10 helical transmembrane segments spans residues 10-30 (YMFF…ALFL), 67-87 (TMGG…CADL), 88-108 (NNFY…IGLV), 129-149 (LLSQ…MGIN), 159-179 (YALF…IISS), 191-211 (GLAT…LYLS), 227-247 (GLGE…GFLW), 255-275 (VFMG…LGIV), 280-300 (ILLL…ILQV), and 329-349 (KIIV…LISI).

This sequence belongs to the glycosyltransferase 4 family. MraY subfamily. Mg(2+) serves as cofactor.

The protein localises to the cell inner membrane. The enzyme catalyses UDP-N-acetyl-alpha-D-muramoyl-L-alanyl-gamma-D-glutamyl-meso-2,6-diaminopimeloyl-D-alanyl-D-alanine + di-trans,octa-cis-undecaprenyl phosphate = di-trans,octa-cis-undecaprenyl diphospho-N-acetyl-alpha-D-muramoyl-L-alanyl-D-glutamyl-meso-2,6-diaminopimeloyl-D-alanyl-D-alanine + UMP. It functions in the pathway cell wall biogenesis; peptidoglycan biosynthesis. In terms of biological role, catalyzes the initial step of the lipid cycle reactions in the biosynthesis of the cell wall peptidoglycan: transfers peptidoglycan precursor phospho-MurNAc-pentapeptide from UDP-MurNAc-pentapeptide onto the lipid carrier undecaprenyl phosphate, yielding undecaprenyl-pyrophosphoryl-MurNAc-pentapeptide, known as lipid I. The protein is Phospho-N-acetylmuramoyl-pentapeptide-transferase of Campylobacter lari (strain RM2100 / D67 / ATCC BAA-1060).